Consider the following 355-residue polypeptide: Probable F-box protein At5g36000 (355 aa).

The segment covering 1 to 14 (MNTRSGDAEGDIRG) has biased composition (basic and acidic residues). The tract at residues 1 to 44 (MNTRSGDAEGDIRGKMIAPVRDGNGGQKRKLVQSNDIQRDEDGG) is disordered. The F-box; degenerate domain occupies 78–124 (QSRFSWYEQDIWTYITRFLDGKSLVKLGATNKWFYKIAMEDTVWRFA).

The polypeptide is Probable F-box protein At5g36000 (Arabidopsis thaliana (Mouse-ear cress)).